A 517-amino-acid chain; its full sequence is Rop guanine nucleotide exchange factor 9 (517 aa).

2 disordered regions span residues 16–76 and 428–517; these read NLDR…SETE and GEET…KDRH. The span at 39–63 shows a compositional bias: polar residues; the sequence is MPESQTQDSLGGSPVETSRPMTSRL. The region spanning 65–429 is the PRONE domain; it reads SRRQDKQQSE…SLARKQCTGE (365 aa). Residues 66-76 are compositionally biased toward basic and acidic residues; it reads RRQDKQQSETE. Positions 440 to 452 are enriched in polar residues; sequence ETDSASAGSSNYS.

Interacts with ARAC11/ROP1 and ARAC10/ROP11. Interacts with PRK6. Expressed in pollen grains and pollen tubes.

Its subcellular location is the cell membrane. Guanine-nucleotide exchange factor (GEF) that acts as an activator of Rop (Rho of plants) GTPases by promoting the exchange of GDP for GTP. This is Rop guanine nucleotide exchange factor 9 from Arabidopsis thaliana (Mouse-ear cress).